The primary structure comprises 101 residues: Phosphoprotein OPG062 (101 aa).

Residues 51–73 (PSSPACERRPSSPSRCERMNNPR) are disordered. A phosphoserine mark is found at S53 and S62. The segment covering 56–70 (CERRPSSPSRCERMN) has biased composition (basic and acidic residues).

This sequence belongs to the orthopoxvirus OPG062 family. Self-associates to form high molecular-weight forms. Interacts with protein OPG157/A30. Interacts with host RICTOR and RPTOR; these interactions disrupt the mTORC1 and mTORC2 crosstalk. Post-translationally, phosphorylated on two serines. While these phosphorylations do not play a role in virion assembly; they are essential for the interaction with host RICTOR and RPTOR.

Its subcellular location is the virion. Its function is as follows. Plays an essential role in virion assembly and morphogenesis. Also plays a role in the inhibition of host immune response by dysregulating mTOR. Sequesters host RICTOR and RPTOR, thereby disrupting mTORC1 and mTORC2 crosstalk. In turn, blocks the host antiviral response in part through mTOR-dependent degradation of cGAS, the primary poxvirus sensor. This chain is Phosphoprotein OPG062 (OPG062), found in Vaccinia virus (strain Western Reserve) (VACV).